The following is a 311-amino-acid chain: Pyrimidine-specific ribonucleoside hydrolase RihA (311 aa).

H240 is an active-site residue.

The protein belongs to the IUNH family. RihA subfamily.

Its function is as follows. Hydrolyzes with equal efficiency cytidine or uridine to ribose and cytosine or uracil, respectively. The chain is Pyrimidine-specific ribonucleoside hydrolase RihA from Escherichia fergusonii (strain ATCC 35469 / DSM 13698 / CCUG 18766 / IAM 14443 / JCM 21226 / LMG 7866 / NBRC 102419 / NCTC 12128 / CDC 0568-73).